Reading from the N-terminus, the 355-residue chain is uncharacterized protein (355 aa).

Residues 1–49 (MPMTVVSGRFSTALLPTCFSLSRLHSVKYAAQRRVVFVSRSAHASSASV) constitute a chloroplast transit peptide.

Belongs to the methyltransferase superfamily.

It localises to the plastid. The protein resides in the chloroplast. Its subcellular location is the plastoglobule. This is an uncharacterized protein from Arabidopsis thaliana (Mouse-ear cress).